The following is a 304-amino-acid chain: Small glutamine-rich tetratricopeptide repeat-containing protein beta (304 aa).

TPR repeat units lie at residues 15-49 (LREQ…SPED), 85-118 (ADQL…DPNN), 119-152 (AVYY…DSKY), and 153-186 (SKAY…DPEN). An N6-acetyllysine modification is found at K131. A phosphoserine mark is found at S293, S295, and S297.

Belongs to the SGT family. As to quaternary structure, homooligomerize.

Its function is as follows. Co-chaperone that binds directly to HSC70 and HSP70 and regulates their ATPase activity. The polypeptide is Small glutamine-rich tetratricopeptide repeat-containing protein beta (SGTB) (Homo sapiens (Human)).